Reading from the N-terminus, the 447-residue chain is Na(+)-translocating NADH-quinone reductase subunit A (447 aa).

Belongs to the NqrA family. In terms of assembly, composed of six subunits; NqrA, NqrB, NqrC, NqrD, NqrE and NqrF.

The enzyme catalyses a ubiquinone + n Na(+)(in) + NADH + H(+) = a ubiquinol + n Na(+)(out) + NAD(+). In terms of biological role, NQR complex catalyzes the reduction of ubiquinone-1 to ubiquinol by two successive reactions, coupled with the transport of Na(+) ions from the cytoplasm to the periplasm. NqrA to NqrE are probably involved in the second step, the conversion of ubisemiquinone to ubiquinol. The chain is Na(+)-translocating NADH-quinone reductase subunit A from Tolumonas auensis (strain DSM 9187 / NBRC 110442 / TA 4).